Consider the following 365-residue polypeptide: uncharacterized protein (365 aa).

31–38 (GPINSGKT) serves as a coordination point for ATP.

It belongs to the archaeal ATPase family.

This is an uncharacterized protein from Methanocaldococcus jannaschii (strain ATCC 43067 / DSM 2661 / JAL-1 / JCM 10045 / NBRC 100440) (Methanococcus jannaschii).